Consider the following 499-residue polypeptide: D-alanine--D-alanyl carrier protein ligase (499 aa).

Position 152-153 (152-153) interacts with ATP; sequence TS. D197 provides a ligand contact to D-alanine. ATP contacts are provided by residues 292-297, D372, 384-387, and K485; these read NTYGPT and YQGR. Residue K485 participates in D-alanine binding.

It belongs to the ATP-dependent AMP-binding enzyme family. DltA subfamily.

The protein localises to the cytoplasm. The enzyme catalyses holo-[D-alanyl-carrier protein] + D-alanine + ATP = D-alanyl-[D-alanyl-carrier protein] + AMP + diphosphate. It participates in cell wall biogenesis; lipoteichoic acid biosynthesis. Functionally, catalyzes the first step in the D-alanylation of lipoteichoic acid (LTA), the activation of D-alanine and its transfer onto the D-alanyl carrier protein (Dcp) DltC. In an ATP-dependent two-step reaction, forms a high energy D-alanyl-AMP intermediate, followed by transfer of the D-alanyl residue as a thiol ester to the phosphopantheinyl prosthetic group of the Dcp. D-alanylation of LTA plays an important role in modulating the properties of the cell wall in Gram-positive bacteria, influencing the net charge of the cell wall. The chain is D-alanine--D-alanyl carrier protein ligase from Lactococcus lactis subsp. lactis (strain IL1403) (Streptococcus lactis).